The chain runs to 214 residues: Endothelial cell-specific chemotaxis regulator (214 aa).

Residues 1-18 (MRLGSAILGLLLLQGYSS) form the signal peptide. Topologically, residues 19–130 (QPTTTQTSQE…PTPTSESVLT (112 aa)) are extracellular. The disordered stretch occupies residues 23–107 (TQTSQEILQK…DATPSPETTS (85 aa)). Residues 28–57 (EILQKSSQVSLVSNQPVTPRSSTMDKQSLS) show a composition bias toward polar residues. Residues 80–90 (RSSSSSSSSSS) show a composition bias toward low complexity. Residues 131-151 (VAAFGVISFIVILVVVVIILV) traverse the membrane as a helical segment. Residues 152–214 (SVVSLRFKCR…KGSMSAEKIL (63 aa)) lie on the Cytoplasmic side of the membrane. Residues 163-184 (NKESEDPQKPGSSGLSESCSTA) form a disordered region. The segment covering 172 to 184 (PGSSGLSESCSTA) has biased composition (polar residues). A phosphoserine mark is found at serine 204 and serine 207.

This sequence belongs to the ECSCR family. In terms of assembly, interacts with FLNA. Interacts with the 20S proteasome subunit PSMA7. Post-translationally, may be heavily O-glycosylated. Expressed in all tissues examined, highest expression was observed in lung and spleen endothelial cells.

It localises to the cell membrane. It is found in the cytoplasm. In terms of biological role, regulates endothelial chemotaxis and tube formation. Has a role in angiogenesis and apoptosis via modulation of the actin cytoskeleton and facilitation of proteasomal degradation of the apoptosis inhibitors BIRC3/IAP1 and BIRC2/IAP2. This chain is Endothelial cell-specific chemotaxis regulator (Ecscr), found in Mus musculus (Mouse).